A 1015-amino-acid chain; its full sequence is Proline-rich basic protein 1 (1015 aa).

Disordered regions lie at residues 1–111 (MLTA…SGEM), 139–164 (AFIS…PDGG), 196–236 (GAAP…RTGS), 259–460 (LSPE…ILSQ), 488–678 (DAVE…APAH), 690–883 (VVPH…GKVL), and 991–1015 (PPLL…LFPL). Residues 84–94 (PGSGFPRGPGS) show a composition bias toward gly residues. Positions 220-233 (PRAAGAPRPRLLLR) are enriched in low complexity. A compositionally biased stretch (polar residues) spans 267 to 276 (SSATFGSTGR). Composition is skewed to basic and acidic residues over residues 277–304 (SEPE…RVRD), 318–328 (LRERAIRRDKP), and 346–367 (SEEK…DRTV). Positions 380 to 391 (PSEVPSRAVRPR) are enriched in low complexity. Over residues 531-542 (IAFTQEAQNGLT) the composition is skewed to polar residues. Pro residues-rich tracts occupy residues 548 to 557 (PPTPSAPGTP) and 691 to 700 (VPHPYEPPEP). Over residues 759–774 (ENRDVEAQRLVPDGDG) the composition is skewed to basic and acidic residues. Pro residues predominate over residues 813–825 (GIAPKPKTPPTAP). Composition is skewed to low complexity over residues 826–835 (EPAAAVQAPL) and 847–858 (APAQPRAASAPP). The segment covering 861–870 (RSPQSPSQGA) has biased composition (polar residues). The segment covering 993–1004 (LLLCAPPSSSGP) has biased composition (low complexity).

This Homo sapiens (Human) protein is Proline-rich basic protein 1 (PROB1).